The following is a 592-amino-acid chain: 3-hydroxy-3-methylglutaryl-coenzyme A reductase 1 (592 aa).

Residues 1 to 45 are disordered; that stretch reads MDLRRRPPKPPVTNNNNSNGSFRSYQPRTSDDDHRRRATTIAPPP. The span at 12–28 shows a compositional bias: polar residues; that stretch reads VTNNNNSNGSFRSYQPR. 2 N-linked (GlcNAc...) asparagine glycosylation sites follow: N16 and N19. The next 2 helical transmembrane spans lie at 47 to 69 and 97 to 117; these read ASDA…FFSV and AIIA…IDFV. The segment at 118–171 is linker; sequence QSFISRASGDAWDLADTIDDDDHRLVTCSPPTPIVSVAKLPNPEPIVTESLPEE. Positions 172–592 are catalytic; it reads DEEIVKSVID…GATTTTTTTT (421 aa). E265 serves as the catalytic Charge relay system. N329 carries an N-linked (GlcNAc...) asparagine glycan. Residues K397 and D473 each act as charge relay system in the active site. H571 acts as the Proton donor in catalysis. N575 is a glycosylation site (N-linked (GlcNAc...) asparagine). S577 bears the Phosphoserine mark.

Belongs to the HMG-CoA reductase family. As to quaternary structure, interacts (via N-terminus) with B''ALPHA and B''BETA. In terms of processing, inactivated by phosphorylation at Ser-577 by KIN10 activated form. Probably also phosphorylated at additional sites. As to expression, found in all tissues. Isoform Short is expressed at low levels specifically in flowers. Expressed in both the tapetum and microspores.

The protein localises to the endoplasmic reticulum membrane. The catalysed reaction is (R)-mevalonate + 2 NADP(+) + CoA = (3S)-3-hydroxy-3-methylglutaryl-CoA + 2 NADPH + 2 H(+). It functions in the pathway metabolic intermediate biosynthesis; (R)-mevalonate biosynthesis; (R)-mevalonate from acetyl-CoA: step 3/3. Its activity is regulated as follows. Regulated at the post-translational level in response to alterations of sphingolipid and sterol biosynthetic pathways. Negatively regulated by a PP2A-dependent dephosphorylation occurring at a site different than Ser-577. Completely inhibited by mevinolin (IC(50) = 12.5 nM). Reversibly inactivated by phosphorylation at Ser-577 by spinach or Brassica oleracea HMGR kinases in a cell-free system. Down-regulated by KIN10 through its phosphorylation at Ser-577. Functionally, catalyzes the synthesis of mevalonate, the specific precursor of all isoprenoid compounds present in plants. The protein is 3-hydroxy-3-methylglutaryl-coenzyme A reductase 1 of Arabidopsis thaliana (Mouse-ear cress).